A 211-amino-acid polypeptide reads, in one-letter code: Uracil phosphoribosyltransferase (211 aa).

5-phospho-alpha-D-ribose 1-diphosphate contacts are provided by residues Arg-78, Arg-103, and 130 to 138 (DPMLATGGT). Uracil-binding positions include Ile-196 and 201 to 203 (GDA). Asp-202 contributes to the 5-phospho-alpha-D-ribose 1-diphosphate binding site.

The protein belongs to the UPRTase family. Mg(2+) is required as a cofactor.

It carries out the reaction UMP + diphosphate = 5-phospho-alpha-D-ribose 1-diphosphate + uracil. The protein operates within pyrimidine metabolism; UMP biosynthesis via salvage pathway; UMP from uracil: step 1/1. With respect to regulation, allosterically activated by GTP. Functionally, catalyzes the conversion of uracil and 5-phospho-alpha-D-ribose 1-diphosphate (PRPP) to UMP and diphosphate. In Beutenbergia cavernae (strain ATCC BAA-8 / DSM 12333 / CCUG 43141 / JCM 11478 / NBRC 16432 / NCIMB 13614 / HKI 0122), this protein is Uracil phosphoribosyltransferase.